The sequence spans 460 residues: SPbeta prophage-derived uncharacterized protein YopQ (460 aa).

The polypeptide is SPbeta prophage-derived uncharacterized protein YopQ (yopQ) (Bacillus subtilis (strain 168)).